The sequence spans 710 residues: Pentatricopeptide repeat-containing protein At3g14330 (710 aa).

10 PPR repeats span residues 166–196 (NPKLLSKLITLFSVCRRLDLARKIFDDVTDS), 200–234 (TEKVWAAMAIGYSRNGSPRDALIVYVDMLCSFIEP), 235–269 (GNFSISVALKACVDLKDLRVGRGIHAQIVKRKEKV), 270–304 (DQVVYNVLLKLYMESGLFDDARKVFDGMSERNVVT), 305–331 (WNSLISVLSKKVRVHEMFNLFRKMQEE), 336–370 (SWATLTTILPACSRVAALLTGKEIHAQILKSKEKP), 371–401 (DVPLLNSLMDMYGKCGEVEYSRRVFDVMLTK), 402–436 (DLASWNIMLNCYAINGNIEEVINLFEWMIESGVAP), 437–467 (DGITFVALLSGCSDTGLTEYGLSLFERMKTE), and 473–503 (ALEHYACLVDILGRAGKIKEAVKVIETMPFK). A type E motif region spans residues 508–583 (IWGSLLNSCR…EAGCSWVQVK (76 aa)). The segment at 584–615 (DKIQIFVAGGGYEFRNSDEYKKVWTELQEAIE) is type E(+) motif. The tract at residues 616 to 710 (KSGYSPNTSV…DGICSCKDYW (95 aa)) is type DYW motif.

It belongs to the PPR family. PCMP-H subfamily.

In Arabidopsis thaliana (Mouse-ear cress), this protein is Pentatricopeptide repeat-containing protein At3g14330 (PCMP-H57).